Reading from the N-terminus, the 434-residue chain is Bifunctional protein GlmU (434 aa).

Residues 1 to 226 (MNKNKISIVI…ENEYKGVNSK (226 aa)) are pyrophosphorylase. UDP-N-acetyl-alpha-D-glucosamine contacts are provided by residues 11 to 14 (LAAG), Lys-25, Gln-77, and 84 to 85 (GT). Mg(2+) is bound at residue Asp-105. Gly-138, Glu-152, Asn-167, and Asn-224 together coordinate UDP-N-acetyl-alpha-D-glucosamine. Asn-224 contacts Mg(2+). Residues 227-247 (KDLSDAEIIMQDKIKNSLMES) are linker. The segment at 248 to 434 (GVTMQLPSTI…DFYYKFFAKK (187 aa)) is N-acetyltransferase. UDP-N-acetyl-alpha-D-glucosamine contacts are provided by Arg-311 and Lys-328. His-339 serves as the catalytic Proton acceptor. Positions 342 and 353 each coordinate UDP-N-acetyl-alpha-D-glucosamine. Residues Ala-356, 362 to 363 (NY), Ser-381, and Ala-399 contribute to the acetyl-CoA site.

It in the N-terminal section; belongs to the N-acetylglucosamine-1-phosphate uridyltransferase family. The protein in the C-terminal section; belongs to the transferase hexapeptide repeat family. In terms of assembly, homotrimer. The cofactor is Mg(2+).

Its subcellular location is the cytoplasm. It catalyses the reaction alpha-D-glucosamine 1-phosphate + acetyl-CoA = N-acetyl-alpha-D-glucosamine 1-phosphate + CoA + H(+). The enzyme catalyses N-acetyl-alpha-D-glucosamine 1-phosphate + UTP + H(+) = UDP-N-acetyl-alpha-D-glucosamine + diphosphate. It participates in nucleotide-sugar biosynthesis; UDP-N-acetyl-alpha-D-glucosamine biosynthesis; N-acetyl-alpha-D-glucosamine 1-phosphate from alpha-D-glucosamine 6-phosphate (route II): step 2/2. Its pathway is nucleotide-sugar biosynthesis; UDP-N-acetyl-alpha-D-glucosamine biosynthesis; UDP-N-acetyl-alpha-D-glucosamine from N-acetyl-alpha-D-glucosamine 1-phosphate: step 1/1. The protein operates within bacterial outer membrane biogenesis; LPS lipid A biosynthesis. In terms of biological role, catalyzes the last two sequential reactions in the de novo biosynthetic pathway for UDP-N-acetylglucosamine (UDP-GlcNAc). The C-terminal domain catalyzes the transfer of acetyl group from acetyl coenzyme A to glucosamine-1-phosphate (GlcN-1-P) to produce N-acetylglucosamine-1-phosphate (GlcNAc-1-P), which is converted into UDP-GlcNAc by the transfer of uridine 5-monophosphate (from uridine 5-triphosphate), a reaction catalyzed by the N-terminal domain. This chain is Bifunctional protein GlmU, found in Sulfurimonas denitrificans (strain ATCC 33889 / DSM 1251) (Thiomicrospira denitrificans (strain ATCC 33889 / DSM 1251)).